Reading from the N-terminus, the 506-residue chain is ATP synthase subunit alpha, plastid (506 aa).

170-177 is an ATP binding site; sequence GDRQTGKT.

It belongs to the ATPase alpha/beta chains family. F-type ATPases have 2 components, CF(1) - the catalytic core - and CF(0) - the membrane proton channel. CF(1) has five subunits: alpha(3), beta(3), gamma(1), delta(1), epsilon(1). CF(0) has four main subunits: a, b, b' and c.

Its subcellular location is the plastid membrane. It carries out the reaction ATP + H2O + 4 H(+)(in) = ADP + phosphate + 5 H(+)(out). In terms of biological role, produces ATP from ADP in the presence of a proton gradient across the membrane. The alpha chain is a regulatory subunit. The polypeptide is ATP synthase subunit alpha, plastid (Prototheca wickerhamii).